A 67-amino-acid polypeptide reads, in one-letter code: Large ribosomal subunit protein bL35 (67 aa).

It belongs to the bacterial ribosomal protein bL35 family.

The sequence is that of Large ribosomal subunit protein bL35 from Dehalococcoides mccartyi (strain ATCC BAA-2100 / JCM 16839 / KCTC 5957 / BAV1).